A 399-amino-acid polypeptide reads, in one-letter code: Acetylornithine aminotransferase (399 aa).

Residues 102 to 103 (GA) and F135 contribute to the pyridoxal 5'-phosphate site. R138 contributes to the N(2)-acetyl-L-ornithine binding site. 220–223 (DEIQ) lines the pyridoxal 5'-phosphate pocket. K249 is modified (N6-(pyridoxal phosphate)lysine). N(2)-acetyl-L-ornithine is bound at residue S277. T278 lines the pyridoxal 5'-phosphate pocket.

The protein belongs to the class-III pyridoxal-phosphate-dependent aminotransferase family. ArgD subfamily. Homodimer. Requires pyridoxal 5'-phosphate as cofactor.

Its subcellular location is the cytoplasm. The enzyme catalyses N(2)-acetyl-L-ornithine + 2-oxoglutarate = N-acetyl-L-glutamate 5-semialdehyde + L-glutamate. It participates in amino-acid biosynthesis; L-arginine biosynthesis; N(2)-acetyl-L-ornithine from L-glutamate: step 4/4. The sequence is that of Acetylornithine aminotransferase from Oceanobacillus iheyensis (strain DSM 14371 / CIP 107618 / JCM 11309 / KCTC 3954 / HTE831).